Consider the following 265-residue polypeptide: Novel plant SNARE 12 (265 aa).

The Cytoplasmic segment spans residues 1 to 217; sequence MASELPMSPH…IGRQVATDKC (217 aa). A coiled-coil region spans residues 32-106; that stretch reads LDKIKDSSRQ…ALRKTYLNTL (75 aa). Position 74 is a phosphoserine (Ser74). In terms of domain architecture, t-SNARE coiled-coil homology spans 146 to 208; it reads MKRMDETDQA…KKASQLVKEI (63 aa). A helical; Anchor for type IV membrane protein membrane pass occupies residues 218–238; that stretch reads IMAFLFLIVCGVIAIIIVKIV. The Vesicular segment spans residues 239–265; it reads NPNNKDIRDIPGLAPPAQSRKLLYFRE.

This sequence belongs to the novel plant SNARE family. In terms of tissue distribution, expressed in roots, stems, flower, siliques and leaves.

It localises to the membrane. Vesicle trafficking protein that functions in the secretory pathway. The sequence is that of Novel plant SNARE 12 (NPSN12) from Arabidopsis thaliana (Mouse-ear cress).